We begin with the raw amino-acid sequence, 299 residues long: Junctional adhesion molecule A (299 aa).

A signal peptide spans Met1–Gly27. Ig-like V-type domains lie at Ser28–Lys125 and Pro135–Arg228. The Extracellular portion of the chain corresponds to Ser28–Val238. 2 disulfide bridges follow: Cys50/Cys109 and Cys153/Cys212. Asn185 carries N-linked (GlcNAc...) asparagine glycosylation. The chain crosses the membrane as a helical span at residues Ile239–Phe259. Over Ala260–Val299 the chain is Cytoplasmic. Ser281, Ser284, and Ser287 each carry phosphoserine.

It belongs to the immunoglobulin superfamily. As to quaternary structure, interacts with the ninth PDZ domain of MPDZ. Interacts with the first PDZ domain of PARD3. The association between PARD3 and PARD6B probably disrupts this interaction. Interacts with ITGAL (via I-domain). Interacts with CD151. In terms of assembly, (Microbial infection) Interacts with Mammalian reovirus sigma-1 capsid protein. (Microbial infection) Interacts with Human Rotavirus strain Wa vp4 capsid protein. N-glycosylated. Post-translationally, (Microbial infection) Cleaved by H.pylori virulence factor PqqE. Cleavage leads to altered tight junction functions. Expressed in endothelium, epithelium and leukocytes (at protein level).

The protein resides in the cell junction. It localises to the tight junction. The protein localises to the cell membrane. In terms of biological role, seems to play a role in epithelial tight junction formation. Appears early in primordial forms of cell junctions and recruits PARD3. The association of the PARD6-PARD3 complex may prevent the interaction of PARD3 with JAM1, thereby preventing tight junction assembly. Plays a role in regulating monocyte transmigration involved in integrity of epithelial barrier. Ligand for integrin alpha-L/beta-2 involved in memory T-cell and neutrophil transmigration. Involved in platelet activation. Functionally, (Microbial infection) Acts as a receptor for Mammalian reovirus sigma-1. Its function is as follows. (Microbial infection) Acts as a receptor for Human Rotavirus strain Wa. In Homo sapiens (Human), this protein is Junctional adhesion molecule A (F11R).